The sequence spans 255 residues: Acetylglutamate kinase (255 aa).

Substrate-binding positions include 40 to 41 (GG), arginine 62, and asparagine 153.

Belongs to the acetylglutamate kinase family. ArgB subfamily.

The protein resides in the cytoplasm. It catalyses the reaction N-acetyl-L-glutamate + ATP = N-acetyl-L-glutamyl 5-phosphate + ADP. Its pathway is amino-acid biosynthesis; L-arginine biosynthesis; N(2)-acetyl-L-ornithine from L-glutamate: step 2/4. Its function is as follows. Catalyzes the ATP-dependent phosphorylation of N-acetyl-L-glutamate. The sequence is that of Acetylglutamate kinase from Bacillus anthracis (strain A0248).